The sequence spans 100 residues: Urease subunit gamma (100 aa).

The protein belongs to the urease gamma subunit family. As to quaternary structure, heterotrimer of UreA (gamma), UreB (beta) and UreC (alpha) subunits. Three heterotrimers associate to form the active enzyme.

The protein resides in the cytoplasm. The enzyme catalyses urea + 2 H2O + H(+) = hydrogencarbonate + 2 NH4(+). It participates in nitrogen metabolism; urea degradation; CO(2) and NH(3) from urea (urease route): step 1/1. This is Urease subunit gamma from Paraburkholderia phymatum (strain DSM 17167 / CIP 108236 / LMG 21445 / STM815) (Burkholderia phymatum).